Here is a 289-residue protein sequence, read N- to C-terminus: Acetyl-coenzyme A carboxylase carboxyl transferase subunit beta (289 aa).

Positions 28 to 289 constitute a CoA carboxyltransferase N-terminal domain; that stretch reads VMTKCPECKK…QGGGMAVWQS (262 aa). 4 residues coordinate Zn(2+): Cys-32, Cys-35, Cys-51, and Cys-54. The C4-type zinc finger occupies 32–54; that stretch reads CPECKKIMYTKELLKNLKVCVNC.

It belongs to the AccD/PCCB family. In terms of assembly, acetyl-CoA carboxylase is a heterohexamer composed of biotin carboxyl carrier protein (AccB), biotin carboxylase (AccC) and two subunits each of ACCase subunit alpha (AccA) and ACCase subunit beta (AccD). It depends on Zn(2+) as a cofactor.

The protein resides in the cytoplasm. It carries out the reaction N(6)-carboxybiotinyl-L-lysyl-[protein] + acetyl-CoA = N(6)-biotinyl-L-lysyl-[protein] + malonyl-CoA. It functions in the pathway lipid metabolism; malonyl-CoA biosynthesis; malonyl-CoA from acetyl-CoA: step 1/1. Its function is as follows. Component of the acetyl coenzyme A carboxylase (ACC) complex. Biotin carboxylase (BC) catalyzes the carboxylation of biotin on its carrier protein (BCCP) and then the CO(2) group is transferred by the transcarboxylase to acetyl-CoA to form malonyl-CoA. In Bacillus cereus (strain G9842), this protein is Acetyl-coenzyme A carboxylase carboxyl transferase subunit beta.